We begin with the raw amino-acid sequence, 388 residues long: MVELNDVPGEEEFPRATYLETMVRLLDTVSYNDENFTDEERVECLKYAYGKAAEHFAQPHVQETLKVPPKRMAAALKTIVGMCVYSWCRVSKEVMADLSIHYTYTLLLDDSREEPAGTMATWYEDLLNARPQAHGWWRLVNDFIPNVLRHYGGYCQMNMVRSTIDFFQGCWIEQHNFKGFRGSSDYPGFLRRINGLGHCVGSSIWPIELVDEEEHFLEITTAIAQMENWMVWTNDLFSFYKEYFAERDQTSLVNNYVECEGITLDQALDKLCKDTIRSSEEIIQVFHDKDPKMYEILTRFIQGYITWHLCDDRYRLVEVYEAAGDDPVAQKFKKYAESARRVGAIDPARYCVPSVTELCEREMAKQSAGRSWDFGLGKIANKISSVAQ.

Positions 109, 173, 234, 238, 242, and 248 each coordinate Mg(2+). Residues 109 to 113 form an aspartate-rich domain region; that stretch reads DDSRE.

The protein belongs to the trichodiene synthase family. The cofactor is Mg(2+). Mn(2+) is required as a cofactor.

The catalysed reaction is (2E,6E)-farnesyl diphosphate = trichodiene + diphosphate. The protein operates within sesquiterpene biosynthesis; trichothecene biosynthesis. Trichodiene synthase; part of the gene cluster that mediates the production of the antimicrobial trichothecene harzianum A (HA) that plays a role in Botrytis cinerea antagonistic activity and plant defense priming. The biosynthesis of harzianum A begins with the cyclization of farnesyl diphosphate to trichodiene and is catalyzed by the trichodiene synthase TRI5. Trichodiene undergoes a series of oxygenations catalyzed by the cytochrome P450 monooxygenase TRI4. TRI4 controls the addition of 3 oxygens at C-2, C-11, and the C-12, C-13-epoxide to form the intermediate isotrichodiol. Isotrichodiol then undergoes a non-enzymatic isomerization and cyclization to form 12,13-epoxytrichothec-9-ene (EPT) which is further converted to trichodermol by the cytochrome P450 monooxygenase TRI11 via C-4 hydroxylation. The last step of HA synthesis is esterification of an octatriendioyl moiety to the C-4 oxygen of trichodermol. The octatriendioyl moiety is probably produced by the polyketide synthase TRI17 and the esterification performed by the trichothecene O-acetyltransferase TRI3. The sequence is that of Trichodiene synthase from Trichoderma arundinaceum.